Here is a 210-residue protein sequence, read N- to C-terminus: Peptidyl-tRNA hydrolase (210 aa).

Residue Tyr14 participates in tRNA binding. His19 (proton acceptor) is an active-site residue. Residues Phe64, Asn66, and Asn112 each coordinate tRNA.

Belongs to the PTH family. In terms of assembly, monomer.

The protein resides in the cytoplasm. It carries out the reaction an N-acyl-L-alpha-aminoacyl-tRNA + H2O = an N-acyl-L-amino acid + a tRNA + H(+). Functionally, hydrolyzes ribosome-free peptidyl-tRNAs (with 1 or more amino acids incorporated), which drop off the ribosome during protein synthesis, or as a result of ribosome stalling. Its function is as follows. Catalyzes the release of premature peptidyl moieties from peptidyl-tRNA molecules trapped in stalled 50S ribosomal subunits, and thus maintains levels of free tRNAs and 50S ribosomes. The sequence is that of Peptidyl-tRNA hydrolase from Methylorubrum populi (strain ATCC BAA-705 / NCIMB 13946 / BJ001) (Methylobacterium populi).